A 507-amino-acid polypeptide reads, in one-letter code: Transcription factor SOX-9 (507 aa).

2 disordered regions span residues 1 to 67 and 160 to 250; these read MNLL…SEED and RLRV…AGKV. Low complexity predominate over residues 30–41; the sequence is SAGSPCPSGSGS. A compositionally biased stretch (polar residues) spans 42-52; the sequence is DTENTRPQENT. 2 stretches are compositionally biased toward basic and acidic residues: residues 56–67 and 160–174; these read GEPDLKKESEED and RLRV…DYKY. The tract at residues 63-103 is dimerization (DIM); the sequence is ESEEDKFPVCIREAVSQVLKGYDWTLVPMPVRVNGSSKNKP. The interval 63–103 is PQA; sequence ESEEDKFPVCIREAVSQVLKGYDWTLVPMPVRVNGSSKNKP. The residue at position 64 (S64) is a Phosphoserine. A DNA-binding region (HMG box) is located at residues 105–173; that stretch reads VKRPMNAFMV…QHKKDHPDYK (69 aa). S211 is modified (phosphoserine). Residues 224 to 307 form a transactivation domain (TAM) region; that stretch reads PGEHSGQSQG…LPPNGHPGVP (84 aa). 2 consecutive short sequence motifs (9aaTAD) follow at residues 275–284 and 290–298; these read IGELSSDVIS and DVNEFDQYL. Residues 335–429 are disordered; that stretch reads WMSKQQAPPP…PFNLPHYNPS (95 aa). The span at 341–369 shows a compositional bias: pro residues; it reads APPPPPQQPPQAPQAPQAPPQQQAPPQPQ. Polar residues predominate over residues 378–420; it reads HTLTTLSSEPGQSQRTHIKTEQLSPSHYSEQQQHSPQQISYSP. Residues 392 to 507 are transactivation domain (TAC); the sequence is RTHIKTEQLS…QPVYTQLTRP (116 aa). K396 is covalently cross-linked (Glycyl lysine isopeptide (Lys-Gly) (interchain with G-Cter in ubiquitin)). The 9aaTAD 3 signature appears at 458 to 466; that stretch reads SGLYSTFTY. The segment at 477 to 507 is disordered; sequence PIADTSGVPSIPQTHSPQHWEQPVYTQLTRP. Polar residues predominate over residues 483–507; it reads GVPSIPQTHSPQHWEQPVYTQLTRP.

In terms of assembly, homodimer; homodimerization is required for activity. Interacts (via C-terminus) with ZNF219; forming a complex that binds to the COL2A1 promoter and activates COL2A1 expression. Interacts with DDRGK1. Interacts with EP300/p300. Interacts with beta-catenin (CTNNB1); inhibiting CTNNB1 activity by competing with the binding sites of TCF/LEF within CTNNB1. Acetylated; acetylation impairs nuclear localization and ability to transactivate expression of target genes. Deacetylated by SIRT1. Post-translationally, phosphorylation at Ser-64 and Ser-211 by PKA increases transcriptional activity and may help delay chondrocyte maturation downstream of PTHLH/PTHrP signaling. Phosphorylation at either Ser-64 or Ser-211 is required for sumoylation, but phosphorylation is not dependent on sumoylation. Phosphorylated on tyrosine residues; tyrosine dephosphorylation by PTPN11/SHP2 blocks SOX9 phosphorylation by PKA and subsequent SUMOylation. In terms of processing, sumoylated; phosphorylation at either Ser-64 or Ser-211 is required for sumoylation. Sumoylation is induced by BMP signaling pathway. Ubiquitinated; ubiquitination leads to proteasomal degradation and is negatively regulated by DDRGK1.

It is found in the nucleus. Its function is as follows. Transcription factor that plays a key role in chondrocytes differentiation and skeletal development. Specifically binds the 5'-ACAAAG-3' DNA motif present in enhancers and super-enhancers and promotes expression of genes important for chondrogenesis, including cartilage matrix protein-coding genes COL2A1, COL4A2, COL9A1, COL11A2 and ACAN, SOX5 and SOX6. Also binds to some promoter regions. Plays a central role in successive steps of chondrocyte differentiation. Absolutely required for precartilaginous condensation, the first step in chondrogenesis during which skeletal progenitors differentiate into prechondrocytes. Together with SOX5 and SOX6, required for overt chondrogenesis when condensed prechondrocytes differentiate into early stage chondrocytes, the second step in chondrogenesis. Later, required to direct hypertrophic maturation and block osteoblast differentiation of growth plate chondrocytes: maintains chondrocyte columnar proliferation, delays prehypertrophy and then prevents osteoblastic differentiation of chondrocytes by lowering beta-catenin (CTNNB1) signaling and RUNX2 expression. Also required for chondrocyte hypertrophy, both indirectly, by keeping the lineage fate of chondrocytes, and directly, by remaining present in upper hypertrophic cells and transactivating COL10A1 along with MEF2C. Low lipid levels are the main nutritional determinant for chondrogenic commitment of skeletal progenitor cells: when lipids levels are low, FOXO (FOXO1 and FOXO3) transcription factors promote expression of SOX9, which induces chondrogenic commitment and suppresses fatty acid oxidation. Mechanistically, helps, but is not required, to remove epigenetic signatures of transcriptional repression and deposit active promoter and enhancer marks at chondrocyte-specific genes. Acts in cooperation with the Hedgehog pathway-dependent GLI (GLI1 and GLI3) transcription factors. In addition to cartilage development, also acts as a regulator of proliferation and differentiation in epithelial stem/progenitor cells: involved in the lung epithelium during branching morphogenesis, by balancing proliferation and differentiation and regulating the extracellular matrix. Controls epithelial branching during kidney development. This Rattus norvegicus (Rat) protein is Transcription factor SOX-9.